The chain runs to 898 residues: DNA damage-induced apoptosis suppressor protein (898 aa).

Disordered stretches follow at residues 191–210 (CGSQ…DSDL), 643–670 (SINT…HEGS), and 710–749 (YPIN…FEES). Polar residues-rich tracts occupy residues 643–664 (SINT…PSSS) and 710–725 (YPIN…KPSL). Residues 726 to 741 (QSISPSRYSRPRSQSD) are compositionally biased toward low complexity.

As to expression, highly expressed in the testis, spleen and heart. Expressed at high levels in the primary spermatocytes and to a lesser extent in the round spermatids. Also found in the bone marrow, brain, lung, kidney and liver.

The protein localises to the cytoplasm. The protein resides in the nucleus. Functionally, may be an anti-apoptotic protein involved in DNA repair or cell survival. In Mus musculus (Mouse), this protein is DNA damage-induced apoptosis suppressor protein (Ddias).